The chain runs to 466 residues: MFNIDEIYTISNFLFLCNKTIEDKIPTCWLQGEISNLTRPESGHWYFSLKDSKAQVYCVLFRFNQRHIKFNPKNGMEVLVHVTPTLYKARGNFQLIIQHLEPVGIGNLNLAFEQLKNKLVNEGLFDNIHKKPLPNIINTIGVISSSTGAVIQDIIKVLNNRYPFSDILLFDSMVQGQGSVKKLTNALNAADQSGKCDVIIIARGGGSLEDLWAFNEETLARAIFKASTPIISAIGHETDTTISDFVCDICAPTPSAAAMLVTPDRLELLANTDKLYMRLHQSYQQTLHDYQSVLNQLKLRIPISNKQIAFFSQKLDHVSINLNNHVKSTLVLNNAKLNSIFSALKQHSPIEAIKHIKILNQVSFAQLKHQIKQIININNSALYLANEKLKKAIATLTDKHKTTLSIQANSLHHLSPLNTLSRGFSITTNAKNQILSSITDIKINQAITTQLADGKLYSNIKKIEKN.

The protein belongs to the XseA family. In terms of assembly, heterooligomer composed of large and small subunits.

Its subcellular location is the cytoplasm. It carries out the reaction Exonucleolytic cleavage in either 5'- to 3'- or 3'- to 5'-direction to yield nucleoside 5'-phosphates.. Functionally, bidirectionally degrades single-stranded DNA into large acid-insoluble oligonucleotides, which are then degraded further into small acid-soluble oligonucleotides. This Ruthia magnifica subsp. Calyptogena magnifica protein is Exodeoxyribonuclease 7 large subunit.